The chain runs to 230 residues: Ureidoacrylate amidohydrolase RutB (230 aa).

The active-site Proton acceptor is the Asp-24. Lys-133 is an active-site residue. Cys-166 functions as the Nucleophile in the catalytic mechanism.

The protein belongs to the isochorismatase family. RutB subfamily.

The enzyme catalyses (Z)-3-ureidoacrylate + H2O + H(+) = (Z)-3-aminoacrylate + NH4(+) + CO2. The catalysed reaction is (Z)-3-ureidoacrylate + H2O = (Z)-3-aminoacrylate + carbamate + H(+). It carries out the reaction (Z)-2-methylureidoacrylate + H2O + H(+) = (Z)-2-methylaminoacrylate + NH4(+) + CO2. Hydrolyzes ureidoacrylate to form aminoacrylate and carbamate. The carbamate hydrolyzes spontaneously, thereby releasing one of the nitrogen atoms of the pyrimidine ring as ammonia and one of its carbon atoms as CO2. This chain is Ureidoacrylate amidohydrolase RutB, found in Enterobacter sp. (strain 638).